Here is a 538-residue protein sequence, read N- to C-terminus: [Pyruvate dehydrogenase [acetyl-transferring]]-phosphatase 1, mitochondrial (538 aa).

Residues 1–71 constitute a mitochondrion transit peptide; that stretch reads MPAPTQLFFP…WWQYTQGRRY (71 aa). Positions 109–525 constitute a PPM-type phosphatase domain; that stretch reads VLGFDSNQLP…DDITIIVVQF (417 aa). Residues aspartate 144 and glycine 145 each coordinate Mn(2+). An N6-acetyllysine modification is found at lysine 202. Mn(2+) contacts are provided by aspartate 418 and aspartate 516.

This sequence belongs to the PP2C family. In terms of assembly, heterodimer of a catalytic (PDP1) and a regulatory (PDPR) subunit. The cofactor is Mn(2+). Requires Mg(2+) as cofactor.

It is found in the mitochondrion. The enzyme catalyses O-phospho-L-seryl-[pyruvate dehydrogenase E1 alpha subunit] + H2O = L-seryl-[pyruvate dehydrogenase E1 alpha subunit] + phosphate. Magnesium-dependent and calcium-stimulated. PDP1 activity strongly depends on its Ca(2+)-dependent binding to the lipoyl domain of E2 subunit of component of the pyruvate dehydrogenase complex. Its function is as follows. Mitochondrial enzyme that catalyzes the dephosphorylation and concomitant reactivation of the alpha subunit of the E1 component of the pyruvate dehydrogenase complex (PDC), thereby stimulating the conversion of pyruvate into acetyl-CoA. This chain is [Pyruvate dehydrogenase [acetyl-transferring]]-phosphatase 1, mitochondrial (PDP1), found in Bos taurus (Bovine).